Consider the following 200-residue polypeptide: 3-isopropylmalate dehydratase small subunit (200 aa).

This sequence belongs to the LeuD family. LeuD type 1 subfamily. In terms of assembly, heterodimer of LeuC and LeuD.

The enzyme catalyses (2R,3S)-3-isopropylmalate = (2S)-2-isopropylmalate. It participates in amino-acid biosynthesis; L-leucine biosynthesis; L-leucine from 3-methyl-2-oxobutanoate: step 2/4. Catalyzes the isomerization between 2-isopropylmalate and 3-isopropylmalate, via the formation of 2-isopropylmaleate. In Haemophilus influenzae (strain PittEE), this protein is 3-isopropylmalate dehydratase small subunit.